Consider the following 689-residue polypeptide: Glycine--tRNA ligase beta subunit (689 aa).

It belongs to the class-II aminoacyl-tRNA synthetase family. Tetramer of two alpha and two beta subunits.

Its subcellular location is the cytoplasm. The enzyme catalyses tRNA(Gly) + glycine + ATP = glycyl-tRNA(Gly) + AMP + diphosphate. The protein is Glycine--tRNA ligase beta subunit of Actinobacillus succinogenes (strain ATCC 55618 / DSM 22257 / CCUG 43843 / 130Z).